A 312-amino-acid chain; its full sequence is tRNA dimethylallyltransferase (312 aa).

Position 10–17 (10–17 (GPTGVGKT)) interacts with ATP. 12-17 (TGVGKT) contributes to the substrate binding site.

It belongs to the IPP transferase family. As to quaternary structure, monomer. The cofactor is Mg(2+).

It carries out the reaction adenosine(37) in tRNA + dimethylallyl diphosphate = N(6)-dimethylallyladenosine(37) in tRNA + diphosphate. Functionally, catalyzes the transfer of a dimethylallyl group onto the adenine at position 37 in tRNAs that read codons beginning with uridine, leading to the formation of N6-(dimethylallyl)adenosine (i(6)A). The protein is tRNA dimethylallyltransferase of Coprothermobacter proteolyticus (strain ATCC 35245 / DSM 5265 / OCM 4 / BT).